The following is a 967-amino-acid chain: Vacuolar membrane protease (967 aa).

The Cytoplasmic segment spans residues 1-16 (MARPSLSRSNPLGFTP). Residues 17-37 (WPVTVITAVVYLALVVPLLVV) form a helical membrane-spanning segment. Over 38–387 (HHVVPSAPSS…SAFVVFELHT (350 aa)) the chain is Vacuolar. Residues Asn-53 and Asn-119 are each glycosylated (N-linked (GlcNAc...) asparagine). Zn(2+) is bound by residues His-171 and Asp-183. Glu-217 acts as the Proton acceptor in catalysis. The Zn(2+) site is built by Glu-218, Glu-243, and His-316. A helical transmembrane segment spans residues 388–408 (LFALSVTLLVVAPLVLLVTSI). Topologically, residues 409–441 (ALNRADKMYLFRASASPEDSDGSEAVLLHGVRG) are cytoplasmic. The chain crosses the membrane as a helical span at residues 442–462 (FFRFPFLLVIPTAVTVGLAYL). The Vacuolar segment spans residues 463–472 (VTKFNPYIIH). A helical membrane pass occupies residues 473–493 (SSEYAVWSMMISAWVFLAWFV). Residues 494-507 (SRVADFARPSAFHR) lie on the Cytoplasmic side of the membrane. The chain crosses the membrane as a helical span at residues 508 to 528 (VYTLTWLFLVEWVLLVISTVY). Residues 529–532 (ENKY) lie on the Vacuolar side of the membrane. Residues 533–553 (GLAGGYFVFFAFAGTFLATWI) traverse the membrane as a helical segment. At 554 to 663 (SYLELFALPR…WSIHLPKWVW (110 aa)) the chain is on the cytoplasmic side. The disordered stretch occupies residues 579-612 (SSHGSRLGTASGEDVEDGEDEDEDDDGTTAEATE). Positions 591–606 (EDVEDGEDEDEDDDGT) are enriched in acidic residues. The helical transmembrane segment at 664–684 (VLQFLLTAPLVLTFVGPLALL) threads the bilayer. At 685 to 700 (LTSALRQTGQDGSSSL) the chain is on the vacuolar side. The helical transmembrane segment at 701 to 721 (FIYIAVAALTTLLFIPLLPFI) threads the bilayer. Topologically, residues 722–727 (HRYTHH) are cytoplasmic. The chain crosses the membrane as a helical span at residues 728 to 748 (IPLFLLCVFAGTLIYNLVAFP). The Vacuolar portion of the chain corresponds to 749–967 (FSPANRLKLF…LVEGSRRFEI (219 aa)). 2 N-linked (GlcNAc...) asparagine glycosylation sites follow: Asn-795 and Asn-832.

It belongs to the peptidase M28 family. Zn(2+) is required as a cofactor.

It localises to the vacuole membrane. Functionally, may be involved in vacuolar sorting and osmoregulation. The polypeptide is Vacuolar membrane protease (Neosartorya fischeri (strain ATCC 1020 / DSM 3700 / CBS 544.65 / FGSC A1164 / JCM 1740 / NRRL 181 / WB 181) (Aspergillus fischerianus)).